Consider the following 129-residue polypeptide: Glycine cleavage system H protein (129 aa).

One can recognise a Lipoyl-binding domain in the interval 24–106; that stretch reads IATIGISAFA…YGEGWLVKVR (83 aa). Lysine 65 carries the post-translational modification N6-lipoyllysine.

The protein belongs to the GcvH family. As to quaternary structure, the glycine cleavage system is composed of four proteins: P, T, L and H. (R)-lipoate is required as a cofactor.

In terms of biological role, the glycine cleavage system catalyzes the degradation of glycine. The H protein shuttles the methylamine group of glycine from the P protein to the T protein. In Cyanothece sp. (strain PCC 7425 / ATCC 29141), this protein is Glycine cleavage system H protein.